A 278-amino-acid polypeptide reads, in one-letter code: HTH-type transcriptional regulator HdfR (278 aa).

The 58-residue stretch at 1–58 (MDTELLKTFLEVSRTRHFGRAAEALYLTQSAVSFRIRQLENQLGVNLFTRHRNNIRLT) folds into the HTH lysR-type domain. The segment at residues 18-37 (FGRAAEALYLTQSAVSFRIR) is a DNA-binding region (H-T-H motif).

The protein belongs to the LysR transcriptional regulatory family.

Negatively regulates the transcription of the flagellar master operon flhDC by binding to the upstream region of the operon. The protein is HTH-type transcriptional regulator HdfR of Salmonella newport (strain SL254).